A 369-amino-acid chain; its full sequence is Mannose-1-phosphate guanylyltransferase catalytic subunit beta (369 aa).

The substrate-binding domain stretch occupies residues 12 to 231 (RALILVGGYG…TGFWMDIGQP (220 aa)). A GDP-alpha-D-mannose-binding site is contributed by Asp-120. Residue Asp-120 coordinates Mg(2+). Lys-171 is an active-site residue. GDP-alpha-D-mannose is bound at residue Asp-227. Asp-227 contributes to the Mg(2+) binding site. Residues 254–369 (YTGPGVVGNV…ASVPEPQIIM (116 aa)) are hexapeptide repeat domain.

It belongs to the transferase hexapeptide repeat family. As to quaternary structure, component of the GMPPA-GMPPB mannose-1-phosphate guanylyltransferase complex composed of 4 Gmppa subunits and 8 Gmppb subunits; the complex is organized into three layers, a central layer made up of 2 Gmppa dimers sandwiched between two layers each made up of 2 Gmppb dimers. Gmppb catalytic activity is reduced when part of the complex and binding of GDP-alpha-D-Mannose by Gmppa induces allosteric feedback inhibition of Gmppb. The cofactor is Mg(2+).

The catalysed reaction is alpha-D-mannose 1-phosphate + GTP + H(+) = GDP-alpha-D-mannose + diphosphate. Its pathway is nucleotide-sugar biosynthesis; GDP-alpha-D-mannose biosynthesis; GDP-alpha-D-mannose from alpha-D-mannose 1-phosphate (GTP route): step 1/1. Its activity is regulated as follows. Enzyme activity is reduced by incorporation into the GMPPA-GMPPB mannose-1-phosphate guanylyltransferase complex. Allosterically inhibited, when part of the GMPPA-GMPPB complex, by GDP-alpha-D-mannose binding to Gmppa. In terms of biological role, catalytic subunit of the GMPPA-GMPPB mannose-1-phosphate guanylyltransferase complex. Catalyzes the formation of GDP-mannose, an essential precursor of glycan moieties of glycoproteins and glycolipids. Can catalyze the reverse reaction in vitro. Together with GMPPA regulates GDP-alpha-D-mannose levels. This chain is Mannose-1-phosphate guanylyltransferase catalytic subunit beta, found in Drosophila melanogaster (Fruit fly).